Reading from the N-terminus, the 61-residue chain is MKGTPSFGKMNKTPTHVRCRRCGRNSFNARKGYCAACGFGRSKKIRRYSWQNKKVNGVRLV.

Zn(2+)-binding residues include C19, C22, C34, and C37. The C4-type zinc-finger motif lies at 19–37; sequence CRRCGRNSFNARKGYCAAC.

The protein belongs to the eukaryotic ribosomal protein eL37 family. The cofactor is Zn(2+).

Functionally, binds to the 23S rRNA. This Sulfolobus acidocaldarius (strain ATCC 33909 / DSM 639 / JCM 8929 / NBRC 15157 / NCIMB 11770) protein is Large ribosomal subunit protein eL37.